A 215-amino-acid chain; its full sequence is MVKIKICGITRLSDALDACFAGADALGFNFSSKSPRAIAPERAKEIIEKLPPFVESTGIFVDQSPEEINALCQYCRLQIAQLHSEQYSPEQARSITAAKVIKVFRPEENFAVEEVFAFAQNSGINAFLFDAYRPGMAGGTGETIEASLATRIFNELGNSCYAILAGGLNATNVGEAIRRIQPYGVDTASGVESRPGIKDSREIRSFVKAVHHGGH.

Belongs to the TrpF family.

It carries out the reaction N-(5-phospho-beta-D-ribosyl)anthranilate = 1-(2-carboxyphenylamino)-1-deoxy-D-ribulose 5-phosphate. It functions in the pathway amino-acid biosynthesis; L-tryptophan biosynthesis; L-tryptophan from chorismate: step 3/5. This Chlorobium phaeobacteroides (strain DSM 266 / SMG 266 / 2430) protein is N-(5'-phosphoribosyl)anthranilate isomerase.